The sequence spans 231 residues: Ion-translocating oxidoreductase complex subunit E (231 aa).

The next 6 membrane-spanning stretches (helical) occupy residues 18-38 (ALVQ…ATNA), 39-59 (LGLG…ISTL), 63-83 (TPAE…VSAV), 86-106 (LINA…PLIV), 125-145 (ALSA…MCVL), and 182-202 (PFLL…MLAG).

The protein belongs to the NqrDE/RnfAE family. As to quaternary structure, the complex is composed of six subunits: RsxA, RsxB, RsxC, RsxD, RsxE and RsxG.

Its subcellular location is the cell inner membrane. Its function is as follows. Part of a membrane-bound complex that couples electron transfer with translocation of ions across the membrane. Required to maintain the reduced state of SoxR. The polypeptide is Ion-translocating oxidoreductase complex subunit E (Escherichia coli (strain SMS-3-5 / SECEC)).